Reading from the N-terminus, the 734-residue chain is Photosystem I P700 chlorophyll a apoprotein A2 (734 aa).

Helical transmembrane passes span 46-69 (IFAS…FHVA), 135-158 (LYTG…LHLQ), 175-199 (LNHH…HVAI), 273-291 (IAHH…GHMY), 330-353 (IHFQ…QHMY), 369-395 (AALY…IFFI), 417-439 (AIIS…LYVH), and 517-535 (FLVH…LILV). Positions 559 and 568 each coordinate [4Fe-4S] cluster. A run of 2 helical transmembrane segments spans residues 575–596 (AFYL…YWHW) and 643–665 (LSVW…MFLI). Chlorophyll a contacts are provided by His-654, Met-662, and Tyr-670. A phylloquinone-binding site is contributed by Trp-671. Residues 707–727 (LVGLAHFSVGYIFTYAAFLIA) form a helical membrane-spanning segment.

This sequence belongs to the PsaA/PsaB family. The PsaA/B heterodimer binds the P700 chlorophyll special pair and subsequent electron acceptors. PSI consists of a core antenna complex that captures photons, and an electron transfer chain that converts photonic excitation into a charge separation. The eukaryotic PSI reaction center is composed of at least 11 subunits. P700 is a chlorophyll a/chlorophyll a' dimer, A0 is one or more chlorophyll a, A1 is one or both phylloquinones and FX is a shared 4Fe-4S iron-sulfur center. is required as a cofactor.

It is found in the plastid. Its subcellular location is the chloroplast thylakoid membrane. It catalyses the reaction reduced [plastocyanin] + hnu + oxidized [2Fe-2S]-[ferredoxin] = oxidized [plastocyanin] + reduced [2Fe-2S]-[ferredoxin]. In terms of biological role, psaA and PsaB bind P700, the primary electron donor of photosystem I (PSI), as well as the electron acceptors A0, A1 and FX. PSI is a plastocyanin-ferredoxin oxidoreductase, converting photonic excitation into a charge separation, which transfers an electron from the donor P700 chlorophyll pair to the spectroscopically characterized acceptors A0, A1, FX, FA and FB in turn. Oxidized P700 is reduced on the lumenal side of the thylakoid membrane by plastocyanin. This is Photosystem I P700 chlorophyll a apoprotein A2 from Aethionema cordifolium (Lebanon stonecress).